We begin with the raw amino-acid sequence, 360 residues long: Ferredoxin--NADP reductase 1 (360 aa).

Residues Asp-43, Gln-51, Tyr-56, Ala-96, Phe-141, Asp-307, and Ser-348 each contribute to the FAD site.

Belongs to the ferredoxin--NADP reductase type 2 family. As to quaternary structure, homodimer. Requires FAD as cofactor.

It carries out the reaction 2 reduced [2Fe-2S]-[ferredoxin] + NADP(+) + H(+) = 2 oxidized [2Fe-2S]-[ferredoxin] + NADPH. The sequence is that of Ferredoxin--NADP reductase 1 from Cupriavidus taiwanensis (strain DSM 17343 / BCRC 17206 / CCUG 44338 / CIP 107171 / LMG 19424 / R1) (Ralstonia taiwanensis (strain LMG 19424)).